Here is a 422-residue protein sequence, read N- to C-terminus: Enolase (422 aa).

Q161 is a binding site for (2R)-2-phosphoglycerate. E203 functions as the Proton donor in the catalytic mechanism. D240, E283, and D310 together coordinate Mg(2+). (2R)-2-phosphoglycerate contacts are provided by K335, R364, S365, and K386. Residue K335 is the Proton acceptor of the active site.

Belongs to the enolase family. The cofactor is Mg(2+).

It localises to the cytoplasm. Its subcellular location is the secreted. The protein localises to the cell surface. The enzyme catalyses (2R)-2-phosphoglycerate = phosphoenolpyruvate + H2O. Its pathway is carbohydrate degradation; glycolysis; pyruvate from D-glyceraldehyde 3-phosphate: step 4/5. In terms of biological role, catalyzes the reversible conversion of 2-phosphoglycerate (2-PG) into phosphoenolpyruvate (PEP). It is essential for the degradation of carbohydrates via glycolysis. The sequence is that of Enolase from Deinococcus geothermalis (strain DSM 11300 / CIP 105573 / AG-3a).